The sequence spans 552 residues: Small ribosomal subunit protein bS1 (552 aa).

S1 motif domains follow at residues 31–101 (TIKE…ISQQ), 116–179 (NAII…ISRK), 200–268 (TEPV…LSIK), 285–355 (GYAI…VSLK), 372–440 (GDIV…LSAK), and 457–521 (DSVI…ASVH).

It belongs to the bacterial ribosomal protein bS1 family.

Functionally, binds mRNA; thus facilitating recognition of the initiation point. It is needed to translate mRNA with a short Shine-Dalgarno (SD) purine-rich sequence. This is Small ribosomal subunit protein bS1 (rpsA) from Helicobacter pylori (strain J99 / ATCC 700824) (Campylobacter pylori J99).